A 1556-amino-acid polypeptide reads, in one-letter code: Ubiquitin carboxyl-terminal hydrolase 47 (1556 aa).

The tract at residues 117–231 (MKSDGEKAKS…AKKTAKVTSK (115 aa)) is disordered. Residues 146-156 (ASGSSSPSKAK) show a composition bias toward low complexity. Phosphoserine is present on residues Ser-172 and Ser-173. The span at 180–189 (IKTTAAKISK) shows a compositional bias: low complexity. Residues 191-200 (GSEKAPRASP) are compositionally biased toward basic and acidic residues. Residues 208 to 219 (TEINSKNTSSES) show a composition bias toward polar residues. Ser-238 is subject to Phosphoserine. The USP domain occupies 396 to 779 (VGLVNQAMTC…NAYMLMYRQV (384 aa)). Cys-405 functions as the Nucleophile in the catalytic mechanism. 2 stretches are compositionally biased toward polar residues: residues 628-642 (NRSG…QLNG) and 661-673 (LSSG…SSSQ). The tract at residues 628 to 697 (NRSGNSGEQN…SSSTSKSAKQ (70 aa)) is disordered. A compositionally biased stretch (low complexity) spans 688-697 (SSSTSKSAKQ). The Proton acceptor role is filled by His-720. The tract at residues 1087 to 1148 (EPMSQPSPSH…LSSPEDEAAS (62 aa)) is disordered. Positions 1109–1125 (DGDRTLVETDNMAHRGG) are enriched in basic and acidic residues. A compositionally biased stretch (low complexity) spans 1128–1141 (SQVSSTSHSPQLSS). 7 positions are modified to phosphoserine: Ser-1131, Ser-1132, Ser-1140, Ser-1141, Ser-1199, Ser-1201, and Ser-1205.

It belongs to the peptidase C19 family. As to quaternary structure, interacts with ttk.

It localises to the nucleus. It catalyses the reaction Thiol-dependent hydrolysis of ester, thioester, amide, peptide and isopeptide bonds formed by the C-terminal Gly of ubiquitin (a 76-residue protein attached to proteins as an intracellular targeting signal).. Ubiquitin-specific protease that deubiquitinates target proteins to regulate different cellular and developmental pathways. Functions downstream of Dsor1/MEK to positively regulate the Ras/MAPK signaling pathway. Likely to modulate the pathway during various cellular and developmental processes including rl/MAPK activation by the receptors InR, Egfr and sevenless/sev. Functions in the post-translational stabilization of rl/MAPK levels in a mechanism that is independent of rl activity and opposes the activity of the E2 enzyme Unc6 and the putative E3 ligases poe, Ufd4 and Kcmf1, which mediate the ubiquitination and proteasomal degradation of rl. During eye development it may also act downstream of rl/MAPK to negatively regulate the Ras/MAPK signaling pathway by stabilizing the transcriptional repressor ttk and consequently inhibiting photoreceptor cell development. This suggests that at least during eye development, it may act in both the positive and negative regulation of the Ras/MAPK signaling pathway to mediate the development of different cell types. Positively regulates border follicle cell migration during oogenesis by mediating the deubiquitination and stabilization of slbo. In the wing disks it positively regulates wg signaling by stabilizing arm. Has an effect on position-effect variegation. The sequence is that of Ubiquitin carboxyl-terminal hydrolase 47 from Drosophila melanogaster (Fruit fly).